The following is a 179-amino-acid chain: Large ribosomal subunit protein uL5 (179 aa).

Belongs to the universal ribosomal protein uL5 family. In terms of assembly, part of the 50S ribosomal subunit; part of the 5S rRNA/L5/L18/L25 subcomplex. Contacts the 5S rRNA and the P site tRNA. Forms a bridge to the 30S subunit in the 70S ribosome.

Its function is as follows. This is one of the proteins that bind and probably mediate the attachment of the 5S RNA into the large ribosomal subunit, where it forms part of the central protuberance. In the 70S ribosome it contacts protein S13 of the 30S subunit (bridge B1b), connecting the 2 subunits; this bridge is implicated in subunit movement. Contacts the P site tRNA; the 5S rRNA and some of its associated proteins might help stabilize positioning of ribosome-bound tRNAs. This is Large ribosomal subunit protein uL5 from Cellvibrio japonicus (strain Ueda107) (Pseudomonas fluorescens subsp. cellulosa).